The sequence spans 284 residues: MEMO1 family protein STK_20620 (284 aa).

Belongs to the MEMO1 family.

This is MEMO1 family protein STK_20620 from Sulfurisphaera tokodaii (strain DSM 16993 / JCM 10545 / NBRC 100140 / 7) (Sulfolobus tokodaii).